Consider the following 1192-residue polypeptide: Protein WWC2 (1192 aa).

WW domains lie at 10 to 43 (LPLP…DPRD) and 57 to 90 (DELP…DPRK). 2 coiled-coil regions span residues 121 to 194 (KEQR…YKEQ) and 224 to 256 (ELKS…FHLD). Phosphoserine is present on S286. Residues 302-421 (LAEKVRLSLQ…KLEETTKLTT (120 aa)) adopt a coiled-coil conformation. The segment at 441 to 462 (SSLGSLASSRGSLNTSSRGSLN) is disordered. The C2 domain maps to 698-821 (ETAQVQIGLR…FSSEVFTLWY (124 aa)). A coiled-coil region spans residues 859-887 (ALLARTSAELLAVEQELAQEEEEESGQEE). Disordered regions lie at residues 873-895 (QELA…DGDW) and 911-991 (EAEV…SRQH). Acidic residues predominate over residues 875–885 (LAQEEEEESGQ). A compositionally biased stretch (polar residues) spans 923 to 933 (TEDLSSCTSVP). Over residues 938 to 951 (DGNRKESNCAKDLR) the composition is skewed to basic and acidic residues. T1004 is subject to Phosphothreonine. At S1022 the chain carries Phosphoserine. The tract at residues 1031 to 1050 (SLFVRNSTERRSLRVKRTVC) is interaction with PRKCZ. Residues 1068 to 1144 (DLELDLQASL…EQKQGLNAEK (77 aa)) are a coiled coil. Over residues 1124–1137 (QAEKQAEQSKEEQK) the composition is skewed to basic and acidic residues. Residues 1124-1143 (QAEKQAEQSKEEQKQGLNAE) form a disordered region.

Belongs to the WWC family. In terms of assembly, forms homodimers and heterodimers with WWC1 and WWC3. Interacts with DLC1 and PRKCZ. Interacts (via WW domains) with LATS1 and LATS2.

It is found in the cytoplasm. The protein localises to the cytosol. In terms of biological role, regulator of the Hippo signaling pathway, also known as the Salvador-Warts-Hippo (SWH) pathway. Enhances phosphorylation of LATS1 and YAP1 and negatively regulates cell proliferation and organ growth due to a suppression of the transcriptional activity of YAP1, the major effector of the Hippo pathway. The polypeptide is Protein WWC2 (Homo sapiens (Human)).